Reading from the N-terminus, the 77-residue chain is U8-lycotoxin-Ls1g (77 aa).

The N-terminal stretch at 1-20 (MKLIIFTGLVLFAIVSLIEV) is a signal peptide. Residues 21-26 (QADNER) constitute a propeptide that is removed on maturation.

This sequence belongs to the neurotoxin 19 (CSTX) family. 08 (U8-Lctx) subfamily. In terms of processing, contains 4 disulfide bonds. As to expression, expressed by the venom gland.

It localises to the secreted. This chain is U8-lycotoxin-Ls1g, found in Lycosa singoriensis (Wolf spider).